Consider the following 1390-residue polypeptide: MSYSFTEKKRIRKSFAKRASVLDVPFLLATQIDSYTEFLQLGTPLDERKDVGLQAAFKSIFPIVSHNGYARLDFAHYVLGEPPFDVQECQLRGITFAAPLRARIRLTIFDKESSKPVVKEVRENEVYMGEIPLMTANGSFIINGTERVIVSQLHRSPGVFFEHDRGKTHSSGKLLFSARVIPYRGSWLDFEFDPKDLLYFRIDRRRKMPVTILLKALGYTNEEILSEFYSFDTFYLTKSGVFMRVVPERLKGEVAKFDIVAADGKLIVAKDKRITAKHIRDIQTAELDRIEVPADALLGKMLAHNVVNQNTGEVIARANEEVTEEILAKLALAEVEQVEVLFTNDLDQGAYISQTLRTDDIQDQTQARVAIYRMMRPGEPPTEDAVEALFQRLFFSDETYDLSRVGRMKFSSRTYQYKFDDKTPEWFKTLIGEKFASRRDVMEGTLATEDIVSVIAILTELRNGRGEVDDIDHLGNRRVRSVGELAENQFRAGLVRVERAVKERLNQAESDNLMPHDLINAKPVSAAIKEFFGSSQLSQFMDQTNPLSEITHKRRVSALGPGGLTRERAGFEVRDVHPTHYGRVCPIETPEGPNIGLINSLSVYARTNEFGFLETPYRKVVDGKVTNEIDYLSAIEEGRYVIAQANAELDGEGALIDELVTCREKGETILATPDRVQYMDVATGQVVSVAASLIPFLEHDDANRALMGANMQRQAVPCLRPEKAFVGTGIERSVAVDSGTTVVARRGGVVDYVDAGRVVVRVNDEEATAGEVGVDIYNLTKFTRSNQNTNINQRPVVKVGDHIARGDVVADGASTDLGELALGQNMTIAFMPWNGYNYEDSILISEKLVAEDRYTSIHIEELSVVARDTKLGPEEITRDIPNLSERMAGRLDESGIVYIGAEVEAGDVLVGKVTPKGETQLTPEEKLLRAIFGEKASDVKDTSLRVPTGTVGTVIDVQVFTREGIERDKRAQSIIDAELKRYRLDLNDQLRIFDNDAFSRIERLIVGKAANGGPKRLAKGTVIDQEYLAGLPTKHDWFDIRMADEDIAKQLELIKESLAQKREEFDLKFEDKKRKLTQGDELPPGVQKMVKVYLAVKRRLQAGDKMAGRHGNKGVVSRILPVEDMPYMGDGRPVDIVLNPLGVPSRMNIGQILEVHLGWAAKGIGERINRMVREQSAAEIRAYLERIYNETGKPEEIAALSDAEVMQLAQNLSKGMTFATPVFDGAKEAEIKHMLDLAYPDGDELTEKMGFNESKTQMTLFDGRSGEAFDRKVTVGVMHYLKLHHLVDDKMHARSTGPYSLVTQQPLGGKAQFGGQRFGEMEVWALEAYGAAYTLQEMLTVKSDDVTGRTKVYENIVKGEHKIDAGMPESFNVLVKEIRSLGLDMDLERY.

This sequence belongs to the RNA polymerase beta chain family. In terms of assembly, the RNAP catalytic core consists of 2 alpha, 1 beta, 1 beta' and 1 omega subunit. When a sigma factor is associated with the core the holoenzyme is formed, which can initiate transcription.

It catalyses the reaction RNA(n) + a ribonucleoside 5'-triphosphate = RNA(n+1) + diphosphate. In terms of biological role, DNA-dependent RNA polymerase catalyzes the transcription of DNA into RNA using the four ribonucleoside triphosphates as substrates. In Chromobacterium violaceum (strain ATCC 12472 / DSM 30191 / JCM 1249 / CCUG 213 / NBRC 12614 / NCIMB 9131 / NCTC 9757 / MK), this protein is DNA-directed RNA polymerase subunit beta.